A 302-amino-acid polypeptide reads, in one-letter code: Glycine--tRNA ligase alpha subunit (302 aa).

It belongs to the class-II aminoacyl-tRNA synthetase family. In terms of assembly, tetramer of two alpha and two beta subunits.

The protein resides in the cytoplasm. The enzyme catalyses tRNA(Gly) + glycine + ATP = glycyl-tRNA(Gly) + AMP + diphosphate. This is Glycine--tRNA ligase alpha subunit from Wigglesworthia glossinidia brevipalpis.